The following is a 674-amino-acid chain: Regulator of G-protein signaling 9 (674 aa).

The region spanning 30–105 (PETGVRMQNQ…PDGSLYRFQT (76 aa)) is the DEP domain. The G protein gamma domain maps to 219–280 (KQTVVAVKKE…NPWITDDTQF (62 aa)). In terms of domain architecture, RGS spans 298 to 413 (RWAFNFSELI…YARYLKSPIY (116 aa)). The interval 533-573 (SSGLEQKGECSGSMAPRGPSVTESSEASLDTSWPRSRPRAP) is disordered. The segment covering 553–565 (VTESSEASLDTSW) has biased composition (polar residues).

In terms of assembly, heterodimer with GNB5. Interacts with RGS7BP, leading to regulate the subcellular location of the heterodimer formed with GNB5. Component of the RGS9-1-Gbeta5 complex composed of RGS9 (RGS9-1), Gbeta5 (GNB5) and RGS9BP. Interacts with PDE6G and GNAT1. Retinal isoform 3 is light-dependent phosphorylated at 'Ser-478'. Phosphorylation is decreased by light exposition. Highly expressed in the caudate and putamen, lower levels found in the hypothalamus and nucleus accumbens and very low levels in cerebellum. Not expressed in globus pallidus or cingulate cortex. Isoform 2 is expressed predominantly in pineal gland and retina. Isoform 3 is expressed in retina (abundant in photoreceptors).

It localises to the membrane. Functionally, inhibits signal transduction by increasing the GTPase activity of G protein alpha subunits thereby driving them into their inactive GDP-bound form. Binds to GNAT1. Involved in phototransduction; key element in the recovery phase of visual transduction. In Homo sapiens (Human), this protein is Regulator of G-protein signaling 9 (RGS9).